The primary structure comprises 427 residues: Heterogeneous nuclear ribonucleoprotein K (427 aa).

The disordered stretch occupies residues 1–34; that stretch reads METEQQEETFTNTETNGKRPAEDMEEEQAFKRSR. Residues 16 to 34 are compositionally biased toward basic and acidic residues; sequence NGKRPAEDMEEEQAFKRSR. KH domains lie at 39 to 101 and 117 to 182; these read MVEL…LKKI and DCEL…IKII. 2 repeat units span residues 51–73 and 56–59. Positions 51 to 385 are 2 X 22 AA approximate repeats; the sequence is AGAVIGKGGK…QIRHESGASI (335 aa). The segment at 56-371 is 5 X 4 AA repeats of G-X-G-G; the sequence is GKGGKNIKAL…LAGSIIGKGG (316 aa). An RNA-binding RGG-box region spans residues 209 to 246; that stretch reads YGGFTMMFDDRRGRPVGFPMRGRGGFDRMPPNRGGRPM. 3 tandem repeats follow at residues 218–223, 230–233, and 240–243. Positions 218–302 are 2 X 6 AA approximate repeats; it reads DRRGRPVGFP…LMSYDRRGRP (85 aa). Residues 221–305 are disordered; it reads GRPVGFPMRG…YDRRGRPGDR (85 aa). Over residues 249–258 the composition is skewed to basic and acidic residues; the sequence is SRRDYDDMSP. 4 consecutive repeat copies span residues 268–271, 297–302, 363–385, and 368–371. Basic and acidic residues predominate over residues 295-305; that stretch reads SYDRRGRPGDR. Residues 351 to 415 enclose the KH 3 domain; sequence IITTQVTIPK…DQIQNAQYLL (65 aa).

It localises to the cytoplasm. It is found in the nucleus. The protein resides in the nucleoplasm. One of the major pre-mRNA-binding proteins. Binds tenaciously to poly(C) sequences. Likely to play a role in the nuclear metabolism of hnRNAs, particularly for pre-mRNAs that contain cytidine-rich sequences. Can also bind poly(C) single-stranded DNA. May play an important role in p53/TP53 response to DNA damage, acting at the level of both transcription activation and repression. As part of a ribonucleoprotein complex, may negatively regulate the transcription of genes involved in neuronal differentiation. This chain is Heterogeneous nuclear ribonucleoprotein K (HNRNPK), found in Gallus gallus (Chicken).